A 348-amino-acid polypeptide reads, in one-letter code: Protein RecA (348 aa).

Position 65 to 72 (65 to 72 (GPESSGKT)) interacts with ATP.

It belongs to the RecA family.

Its subcellular location is the cytoplasm. Functionally, can catalyze the hydrolysis of ATP in the presence of single-stranded DNA, the ATP-dependent uptake of single-stranded DNA by duplex DNA, and the ATP-dependent hybridization of homologous single-stranded DNAs. It interacts with LexA causing its activation and leading to its autocatalytic cleavage. This is Protein RecA from Vibrio natriegens.